The following is a 227-amino-acid chain: Small ribosomal subunit protein uS3 (227 aa).

Residues 39–107 form the KH type-2 domain; sequence VRQLLQKRLK…PVHITIEEVR (69 aa).

This sequence belongs to the universal ribosomal protein uS3 family. In terms of assembly, part of the 30S ribosomal subunit. Forms a tight complex with proteins S10 and S14.

Functionally, binds the lower part of the 30S subunit head. Binds mRNA in the 70S ribosome, positioning it for translation. The sequence is that of Small ribosomal subunit protein uS3 (rpsC) from Coxiella burnetii (strain RSA 493 / Nine Mile phase I).